The primary structure comprises 489 residues: ERO1-like protein alpha (489 aa).

Positions 1–20 are cleaved as a signal peptide; the sequence is METCVLLLGLFLTSVHVTTA. 8 disulfide bridges follow: Cys-27–Cys-40, Cys-29–Cys-38, Cys-77–Cys-382, Cys-86–Cys-91, Cys-86–Cys-123, Cys-91–Cys-96, Cys-200–Cys-232, and Cys-385–Cys-388. Positions 179, 181, and 192 each coordinate FAD. Residues Ser-243 and His-246 each contribute to the FAD site. An N-linked (GlcNAc...) asparagine glycan is attached at Asn-271. FAD is bound by residues Arg-278 and Arg-291. Asn-375 carries N-linked (GlcNAc...) asparagine glycosylation.

This sequence belongs to the EROs family. As to quaternary structure, predominantly monomer. May function both as a monomer and a homodimer. Requires FAD as cofactor. In terms of processing, the Cys-86/Cys-91 and Cys-385/Cys-388 disulfide bonds constitute the redox-active center. The Cys-86/Cys-91 disulfide bond may accept electron from protein disulfide isomerase (PDI) and funnel them to the active site disulfide Cys-385/Cys-388.

It is found in the endoplasmic reticulum membrane. With respect to regulation, enzyme activity is tightly regulated to prevent the accumulation of reactive oxygen species in the endoplasmic reticulum. Reversibly down-regulated by the formation of disulfide bonds between the active site Cys-86 and Cys-123, and between Cys-91 and Cys-96. Glutathione may be required to regulate its activity in the endoplasmic reticulum. Oxidoreductase involved in disulfide bond formation in the endoplasmic reticulum. Efficiently reoxidizes P4HB/PDI, the enzyme catalyzing protein disulfide formation, in order to allow P4HB to sustain additional rounds of disulfide formation. Following P4HB reoxidation, passes its electrons to molecular oxygen via FAD, leading to the production of reactive oxygen species (ROS) in the cell. Required for the folding of immunoglobulins. This chain is ERO1-like protein alpha, found in Danio rerio (Zebrafish).